A 540-amino-acid chain; its full sequence is Glucose-6-phosphate isomerase (540 aa).

E351 (proton donor) is an active-site residue. Residues H382 and K506 contribute to the active site.

It belongs to the GPI family.

The protein localises to the cytoplasm. The catalysed reaction is alpha-D-glucose 6-phosphate = beta-D-fructose 6-phosphate. It functions in the pathway carbohydrate biosynthesis; gluconeogenesis. The protein operates within carbohydrate degradation; glycolysis; D-glyceraldehyde 3-phosphate and glycerone phosphate from D-glucose: step 2/4. In terms of biological role, catalyzes the reversible isomerization of glucose-6-phosphate to fructose-6-phosphate. This chain is Glucose-6-phosphate isomerase, found in Corynebacterium glutamicum (strain R).